Consider the following 316-residue polypeptide: Acetaldehyde dehydrogenase (316 aa).

11 to 14 (SGNI) contributes to the NAD(+) binding site. Cys131 (acyl-thioester intermediate) is an active-site residue. Residues 162 to 170 (SAGPGTRAN) and Asn289 each bind NAD(+).

The protein belongs to the acetaldehyde dehydrogenase family. As to quaternary structure, interacts with MhpE.

The enzyme catalyses acetaldehyde + NAD(+) + CoA = acetyl-CoA + NADH + H(+). The protein operates within aromatic compound metabolism; 3-phenylpropanoate degradation. Functionally, catalyzes the conversion of acetaldehyde to acetyl-CoA, using NAD(+) and coenzyme A. Is the final enzyme in the meta-cleavage pathway for the degradation of aromatic compounds. This chain is Acetaldehyde dehydrogenase, found in Klebsiella pneumoniae subsp. pneumoniae (strain ATCC 700721 / MGH 78578).